A 681-amino-acid chain; its full sequence is Rabphilin-3A (681 aa).

The segment at 1 to 21 is disordered; that stretch reads MTDTVVNRWMYPGDGPLQSND. The RabBD domain maps to 40 to 157; that stretch reads QRKQEELTDE…KRSGAWFFKG (118 aa). Residues 88-145 form an FYVE-type zinc finger; that stretch reads GDGVNRCILCGEQLGMLGSACVVCEDCKKNVCTKCGVETSNNRPHPVWLCKICLEQRE. Zn(2+) contacts are provided by cysteine 94, cysteine 97, cysteine 111, cysteine 114, cysteine 119, cysteine 122, cysteine 137, and cysteine 140. Residues 162–375 are disordered; that stretch reads VLPQPMPIKK…EEEANSYDSD (214 aa). Residues 199-208 are compositionally biased toward basic and acidic residues; sequence ARGDMEDRRP. Arginine 223 is subject to Omega-N-methylarginine. Basic and acidic residues predominate over residues 243–252; the sequence is RDSEGWDHAH. Position 271 is a phosphoserine (serine 271). The segment covering 278 to 296 has biased composition (pro residues); the sequence is APAPVPSPAPPQPVQPGPP. Residues 347–356 are compositionally biased toward low complexity; sequence AAPYSQAAPA. Over residues 362–375 the composition is skewed to acidic residues; that stretch reads AEEEEEEANSYDSD. The C2 1 domain maps to 379–501; it reads TLGALEFSLL…KANQRKNFNI (123 aa). Ca(2+) contacts are provided by methionine 409, aspartate 410, aspartate 416, aspartate 471, glutamate 472, aspartate 473, glutamate 479, glutamate 526, aspartate 568, aspartate 574, aspartate 628, tyrosine 629, aspartate 630, and aspartate 636. Residues 537 to 670 form the C2 2 domain; that stretch reads ERGKILVSLM…NKDKKIERWH (134 aa). Phosphoserine is present on residues serine 679 and serine 680.

In terms of assembly, interacts with RAB3B, RAB3C, RAB3D, RAB8A, RAB27A and RAB27B. Interacts with RAB3A; this interaction recruits RPH3A to synaptic vesicules. Interacts (via C2B domain) with SNAP25. Interacts with deubiquitinating enzyme CAND1; this interaction results in the deubiquitination of RPH3A. Interacts with GRIN2A and DLG4; this ternary complex regulates NMDA receptor composition at postsynaptic membranes. Interacts with SNCA. Requires Ca(2+) as cofactor. Post-translationally, ubiquitinated. Deubiquitinated by CAND1 to prevent its degradation. In terms of tissue distribution, specifically expressed in brain.

The protein localises to the cytoplasmic vesicle. It localises to the secretory vesicle. It is found in the synaptic vesicle membrane. The protein resides in the cell projection. Its subcellular location is the dendritic spine. The protein localises to the postsynaptic cell membrane. It localises to the membrane. Plays an essential role in docking and fusion steps of regulated exocytosis. At the presynaptic level, RPH3A is recruited by RAB3A to the synaptic vesicle membrane in a GTP-dependent manner where it modulates synaptic vesicle trafficking and calcium-triggered neurotransmitter release. In the post-synaptic compartment, forms a ternary complex with GRIN2A and DLG4 and regulates NMDA receptor stability. Also plays a role in the exocytosis of arginine vasopressin hormone. This Mus musculus (Mouse) protein is Rabphilin-3A (Rph3a).